Reading from the N-terminus, the 520-residue chain is Cytochrome P450 monooxygenase 98 (520 aa).

A helical membrane pass occupies residues 7-27; sequence MLNNNLLIVIGTFAVCVYIVL. Cysteine 445 serves as a coordination point for heme.

Belongs to the cytochrome P450 family. It depends on heme as a cofactor.

Its subcellular location is the membrane. It participates in secondary metabolite biosynthesis. Functionally, cytochrome P450 monooxygenase that is able to use pyrene, phenanthrene, 3,5-dimethoxy-trans-stilbene and 3,5,4'-trimethoxy-trans-stilbene as substrates for oxidation. The sequence is that of Cytochrome P450 monooxygenase 98 from Postia placenta (strain ATCC 44394 / Madison 698-R) (Brown rot fungus).